The following is a 317-amino-acid chain: Beta-ketoacyl-[acyl-carrier-protein] synthase III (317 aa).

Active-site residues include cysteine 112 and histidine 244. The ACP-binding stretch occupies residues 245–249; it reads QANLR. Asparagine 274 is an active-site residue.

Belongs to the thiolase-like superfamily. FabH family. In terms of assembly, homodimer.

The protein resides in the cytoplasm. It catalyses the reaction malonyl-[ACP] + acetyl-CoA + H(+) = 3-oxobutanoyl-[ACP] + CO2 + CoA. The protein operates within lipid metabolism; fatty acid biosynthesis. Its function is as follows. Catalyzes the condensation reaction of fatty acid synthesis by the addition to an acyl acceptor of two carbons from malonyl-ACP. Catalyzes the first condensation reaction which initiates fatty acid synthesis and may therefore play a role in governing the total rate of fatty acid production. Possesses both acetoacetyl-ACP synthase and acetyl transacylase activities. Its substrate specificity determines the biosynthesis of branched-chain and/or straight-chain of fatty acids. In Escherichia coli O9:H4 (strain HS), this protein is Beta-ketoacyl-[acyl-carrier-protein] synthase III.